The sequence spans 582 residues: MPSWREKHEKIVQSKILVIGAGGIGCELLKNLAVTGFRKVHVIDLDTIDISNLNRQFLFRKEHVSSSKAATATQVVKQFCPQIELTFDHDSIFEKKYNMEFFQAYDIVLNALDNRAARNYVNRMCHAANRPLIDSGSGGYFGQVSVIMRGKTECYECVDKPVQQTTYPGCTIRNTPSEHIHCTVWAKHVFNQLFGEVDIDDDVSPDMDAVDPDNTEAVTTEKEKEAMKEEPAPVGTRQWAESVDYDAAKVFDKLFLHDIEYLCKMEHLWKQRKRPSPLEFHTASSTGGEPQSLCDAQRDDTSIWTLSTCAKVFSTCIQELLEQIRAEPDVKLAFDKDHAIIMSFVAACANIRAKIFGIPMKSQFDIKAMAGNIIPAIASTNAIVAGIIVTEAVRVIEGSTVICNSSIATTQSNPRGRIFGGDATNPPNPRCFVCSEKREVFIYVNPDTMTVGGLCEKVLKQKLNMLAPDVMDSATSRIIVSSDGDTDDLLPKKLAEVSIEDGAILSCDDFQQEMEIKLFIKKGDRLAGDDFEVARSEKEPEPDDRKRKADGSEEPEAKRQKVEEKDDKNGNEAVAEITETMA.

Residues 20 to 25, Asp44, 52 to 55, Lys68, 91 to 92, and 113 to 118 contribute to the ATP site; these read GAGGIG, NLNR, SI, and DNRAAR. Residues Cys154 and Cys157 each contribute to the Zn(2+) site. Catalysis depends on Cys170, which acts as the Glycyl thioester intermediate. Positions 204-214 are enriched in acidic residues; sequence SPDMDAVDPDN. The segment at 204–235 is disordered; that stretch reads SPDMDAVDPDNTEAVTTEKEKEAMKEEPAPVG. Residues 219–231 show a composition bias toward basic and acidic residues; the sequence is TTEKEKEAMKEEP. The Zn(2+) site is built by Cys431 and Cys434. A compositionally biased stretch (basic and acidic residues) spans 531-570; sequence FEVARSEKEPEPDDRKRKADGSEEPEAKRQKVEEKDDKNG. Residues 531-582 form a disordered region; that stretch reads FEVARSEKEPEPDDRKRKADGSEEPEAKRQKVEEKDDKNGNEAVAEITETMA.

This sequence belongs to the ubiquitin-activating E1 family. As to quaternary structure, heterodimer with aos-1.

It functions in the pathway protein modification; protein sumoylation. In terms of biological role, the dimeric enzyme acts as an E1 ligase for smo-1. It mediates ATP-dependent activation of smo-1 and formation of a thioester with a conserved cysteine residue on uba-2. In Caenorhabditis elegans, this protein is SUMO-activating enzyme subunit uba-2 (uba-2).